We begin with the raw amino-acid sequence, 147 residues long: Auxin-responsive protein SAUR41 (147 aa).

It belongs to the ARG7 family. In terms of tissue distribution, specifically expressed in the quiescent center and cortex or endodermis initials of root stem niches. Expressed in vascular tissues from hypocotyls, petioles and cotyledons.

Its subcellular location is the cytoplasm. In terms of biological role, plays a role in the regulation of cell expansion, root meristem patterning and auxin transport. The protein is Auxin-responsive protein SAUR41 of Arabidopsis thaliana (Mouse-ear cress).